Reading from the N-terminus, the 940-residue chain is Isoleucine--tRNA ligase (940 aa).

The short motif at 58 to 68 is the 'HIGH' region element; it reads PYANGNIHIGH. Residue E563 participates in L-isoleucyl-5'-AMP binding. The 'KMSKS' region motif lies at 604–608; it reads KMSKS. K607 is an ATP binding site. 4 residues coordinate Zn(2+): C903, C906, C923, and C926.

The protein belongs to the class-I aminoacyl-tRNA synthetase family. IleS type 1 subfamily. As to quaternary structure, monomer. Requires Zn(2+) as cofactor.

The protein resides in the cytoplasm. It catalyses the reaction tRNA(Ile) + L-isoleucine + ATP = L-isoleucyl-tRNA(Ile) + AMP + diphosphate. Catalyzes the attachment of isoleucine to tRNA(Ile). As IleRS can inadvertently accommodate and process structurally similar amino acids such as valine, to avoid such errors it has two additional distinct tRNA(Ile)-dependent editing activities. One activity is designated as 'pretransfer' editing and involves the hydrolysis of activated Val-AMP. The other activity is designated 'posttransfer' editing and involves deacylation of mischarged Val-tRNA(Ile). This Buchnera aphidicola subsp. Acyrthosiphon pisum (strain 5A) protein is Isoleucine--tRNA ligase.